We begin with the raw amino-acid sequence, 235 residues long: Segregation and condensation protein A (235 aa).

This sequence belongs to the ScpA family. Component of a cohesin-like complex composed of ScpA, ScpB and the Smc homodimer, in which ScpA and ScpB bind to the head domain of Smc. The presence of the three proteins is required for the association of the complex with DNA.

Its subcellular location is the cytoplasm. Participates in chromosomal partition during cell division. May act via the formation of a condensin-like complex containing Smc and ScpB that pull DNA away from mid-cell into both cell halves. The sequence is that of Segregation and condensation protein A from Streptococcus uberis (strain ATCC BAA-854 / 0140J).